Consider the following 2290-residue polypeptide: Protein Ycf2 (2290 aa).

1638–1645 (GSIGTGRS) is a binding site for ATP.

This sequence belongs to the Ycf2 family.

It localises to the plastid. It is found in the chloroplast stroma. Probable ATPase of unknown function. Its presence in a non-photosynthetic plant (Epifagus virginiana) and experiments in tobacco indicate that it has an essential function which is probably not related to photosynthesis. This Phalaenopsis aphrodite subsp. formosana (Moth orchid) protein is Protein Ycf2.